The following is a 1018-amino-acid chain: Inner centromere protein pic1 (1018 aa).

A Phosphoserine modification is found at Ser-171. Disordered stretches follow at residues 184–207, 247–287, 306–365, 522–556, 570–756, 781–813, 848–867, and 877–944; these read VPLRETSPSPSETADSPNKLPKQK, RTKD…SSSP, AKES…PPEI, TRKSSNDFNSSNSRPSSNALKSDANENTDSSLPPS, EPLH…TSKP, EPDSVTSVTQPSVGSLRNNFDIGTTNSQNEDRK, TKQNGIMKGKLPSSSTSQSN, and HAPA…LPSW. 2 stretches are compositionally biased toward polar residues: residues 189 to 199 and 268 to 287; these read TSPSPSETADS and PSTTSDAPSSLLNTNVSSSP. A compositionally biased stretch (low complexity) spans 309-320; it reads SLTSSTRLSTSY. 2 stretches are compositionally biased toward polar residues: residues 329–339 and 522–554; these read VAFSSETVTSS and TRKSSNDFNSSNSRPSSNALKSDANENTDSSLP. Composition is skewed to basic and acidic residues over residues 570–580 and 624–644; these read EPLHDDSRQNS and RSSENETHRFKKFYGKERELS. Polar residues predominate over residues 645–664; the sequence is NNEFPSRQTKTVTSANSSNI. Composition is skewed to basic and acidic residues over residues 665–679 and 692–702; these read RDMEHTISDKPRSEP and KPFEEKSEKPT. Polar residues-rich tracts occupy residues 705–719 and 784–808; these read RLVTNPSNVNASWHS and SVTSVTQPSVGSLRNNFDIGTTNSQ. Over residues 890-902 the composition is skewed to low complexity; that stretch reads PSSKSPLLKTPKS.

The protein belongs to the INCENP family. As to quaternary structure, component of the CPC complex at least composed of ark1, bir1 and pic1.

It is found in the nucleus. The protein resides in the cytoplasm. It localises to the cytoskeleton. Its subcellular location is the spindle. Functionally, component of the chromosomal passenger complex (CPC), a complex that acts as a key regulator of mitosis. Has a role in sister chromatid cohesion and condensation. The polypeptide is Inner centromere protein pic1 (pic1) (Schizosaccharomyces pombe (strain 972 / ATCC 24843) (Fission yeast)).